The following is a 323-amino-acid chain: HPr kinase/phosphorylase (323 aa).

Catalysis depends on residues His-142 and Lys-163. 157–164 (GESGVGKS) provides a ligand contact to ATP. Ser-164 is a Mg(2+) binding site. The active-site Proton acceptor; for phosphorylation activity. Proton donor; for dephosphorylation activity is Asp-181. Positions 205–214 (LEVRGLGMLN) are important for the catalytic mechanism of both phosphorylation and dephosphorylation. Glu-206 contributes to the Mg(2+) binding site. Arg-249 is a catalytic residue. Positions 270 to 275 (PVAAGR) are important for the catalytic mechanism of dephosphorylation.

Belongs to the HPrK/P family. In terms of assembly, homohexamer. Mg(2+) serves as cofactor.

The enzyme catalyses [HPr protein]-L-serine + ATP = [HPr protein]-O-phospho-L-serine + ADP + H(+). It catalyses the reaction [HPr protein]-O-phospho-L-serine + phosphate + H(+) = [HPr protein]-L-serine + diphosphate. In terms of biological role, catalyzes the ATP- as well as the pyrophosphate-dependent phosphorylation of a specific serine residue in HPr, a phosphocarrier protein of the phosphoenolpyruvate-dependent sugar phosphotransferase system (PTS). HprK/P also catalyzes the pyrophosphate-producing, inorganic phosphate-dependent dephosphorylation (phosphorolysis) of seryl-phosphorylated HPr (P-Ser-HPr). This Nitrosomonas europaea (strain ATCC 19718 / CIP 103999 / KCTC 2705 / NBRC 14298) protein is HPr kinase/phosphorylase.